The sequence spans 398 residues: 1-deoxy-D-xylulose 5-phosphate reductoisomerase (398 aa).

The NADPH site is built by Thr10, Gly11, Ser12, Ile13, and Asn124. Lys125 serves as a coordination point for 1-deoxy-D-xylulose 5-phosphate. Glu126 is an NADPH binding site. Asp150 is a binding site for Mn(2+). 1-deoxy-D-xylulose 5-phosphate-binding residues include Ser151, Glu152, Ser186, and His209. Glu152 provides a ligand contact to Mn(2+). Position 215 (Gly215) interacts with NADPH. Positions 222, 227, 228, and 231 each coordinate 1-deoxy-D-xylulose 5-phosphate. Glu231 contributes to the Mn(2+) binding site.

The protein belongs to the DXR family. It depends on Mg(2+) as a cofactor. Mn(2+) is required as a cofactor.

The enzyme catalyses 2-C-methyl-D-erythritol 4-phosphate + NADP(+) = 1-deoxy-D-xylulose 5-phosphate + NADPH + H(+). The protein operates within isoprenoid biosynthesis; isopentenyl diphosphate biosynthesis via DXP pathway; isopentenyl diphosphate from 1-deoxy-D-xylulose 5-phosphate: step 1/6. Functionally, catalyzes the NADPH-dependent rearrangement and reduction of 1-deoxy-D-xylulose-5-phosphate (DXP) to 2-C-methyl-D-erythritol 4-phosphate (MEP). This is 1-deoxy-D-xylulose 5-phosphate reductoisomerase from Tolumonas auensis (strain DSM 9187 / NBRC 110442 / TA 4).